The following is a 566-amino-acid chain: Membrane protein insertase YidC (566 aa).

Residues 7-27 form a helical membrane-spanning segment; sequence ILIVALAIVSYVMVLKWNQDY. Residues 38–72 form a disordered region; that stretch reads ASSTTAPGLPDAPTGTSAANDDIPRAASDTTAPAE. The next 5 membrane-spanning stretches (helical) occupy residues 347-367, 373-393, 443-463, 474-494, and 521-541; these read LELT…FWLL, LVGN…GIFF, LGGC…YWVL, FMLW…PIIM, and PIIF…YWVV.

It belongs to the OXA1/ALB3/YidC family. Type 1 subfamily. As to quaternary structure, interacts with the Sec translocase complex via SecD. Specifically interacts with transmembrane segments of nascent integral membrane proteins during membrane integration.

The protein localises to the cell inner membrane. Functionally, required for the insertion and/or proper folding and/or complex formation of integral membrane proteins into the membrane. Involved in integration of membrane proteins that insert both dependently and independently of the Sec translocase complex, as well as at least some lipoproteins. Aids folding of multispanning membrane proteins. This is Membrane protein insertase YidC from Pseudomonas fluorescens (strain ATCC BAA-477 / NRRL B-23932 / Pf-5).